The following is a 474-amino-acid chain: PRAME family member 17 (474 aa).

Residues 97–124 (RWKLQVLDLRDVDGNFWTIWSGARALSC) form an LRR 1; degenerate repeat. The LRR 2; degenerate repeat unit spans residues 179–203 (HLCCNKVQNYSMPTSSFRNLLKRVY). One copy of the LRR 3; degenerate repeat lies at 204–230 (PDSIQELEIKRKCSLNKTGKFAPYLSQ). One copy of the LRR 4; degenerate repeat lies at 231-265 (MSNLRKLFLAFGYDDELYVSGQQQFVPDLDCPFLC). LRR repeat units follow at residues 266 to 291 (LYYPQMLYIRKISNIKEHLEHLLRCL), 292 to 323 (KNPLGTFIFCHAYLADQDMECLSQYPSLSQLK), 324 to 342 (ELHLIHILMWTTNLEPLGA), 348 to 375 (AATLEILTLKDCQIQDSQLRVLLPALSR), and 376 to 400 (CSQLTTFYFRGNETSTNALKDLLCH).

The protein belongs to the PRAME family.

The chain is PRAME family member 17 from Homo sapiens (Human).